Here is a 168-residue protein sequence, read N- to C-terminus: RNA pyrophosphohydrolase (168 aa).

The region spanning 8–160 (PYRPCVGLAI…KRQVYERVAR (153 aa)) is the Nudix hydrolase domain. The Nudix box motif lies at 47–68 (GGIDKGEEPYEAALRELYEETS).

This sequence belongs to the Nudix hydrolase family. RppH subfamily. Requires a divalent metal cation as cofactor.

Functionally, accelerates the degradation of transcripts by removing pyrophosphate from the 5'-end of triphosphorylated RNA, leading to a more labile monophosphorylated state that can stimulate subsequent ribonuclease cleavage. The polypeptide is RNA pyrophosphohydrolase (Azorhizobium caulinodans (strain ATCC 43989 / DSM 5975 / JCM 20966 / LMG 6465 / NBRC 14845 / NCIMB 13405 / ORS 571)).